A 778-amino-acid polypeptide reads, in one-letter code: Ent-trachylobane synthase KSL2, chloroplastic (778 aa).

A chloroplast-targeting transit peptide spans Met-1 to Ile-37. The Mg(2+) site is built by Asp-529, Asp-533, Asn-672, Asp-673, and Asp-680. The short motif at Asp-529 to Asp-533 is the DDXXD motif element.

It belongs to the terpene synthase family. Mg(2+) serves as cofactor.

Its subcellular location is the plastid. It localises to the chloroplast. The catalysed reaction is ent-copalyl diphosphate = ent-trachylobane + diphosphate. It carries out the reaction ent-copalyl diphosphate = ent-kaur-16-ene + diphosphate. It functions in the pathway secondary metabolite biosynthesis; terpenoid biosynthesis. Functionally, diterpene cyclase involved in the biosynthesis of labdane-related diterpenoids (LRDs) natural products. Catalyzes the cyclization of ent-CDP into ent-trachylobane as a major and ent-kaurene as a minor product. This chain is Ent-trachylobane synthase KSL2, chloroplastic, found in Ricinus communis (Castor bean).